Here is a 194-residue protein sequence, read N- to C-terminus: MSYIPYVVEKTGRGERSYDIYSRLLKDRIIMLSGEINDAVASTVVAQLLFLEAEDPDKDIYLYINSPGGVVTSGMSIFDTMNYIKPDVCTICIGQAASMGAFLLSSGAKGKRYSLPNSRIMIHQPLGGARGQATDIQIQAKEIQRLKDTLNGILASQTGQDFATIEKDTDRDNFMSAEEACSYGLIDEVITKHK.

S98 acts as the Nucleophile in catalysis. H123 is a catalytic residue.

This sequence belongs to the peptidase S14 family. Fourteen ClpP subunits assemble into 2 heptameric rings which stack back to back to give a disk-like structure with a central cavity, resembling the structure of eukaryotic proteasomes.

It is found in the cytoplasm. The enzyme catalyses Hydrolysis of proteins to small peptides in the presence of ATP and magnesium. alpha-casein is the usual test substrate. In the absence of ATP, only oligopeptides shorter than five residues are hydrolyzed (such as succinyl-Leu-Tyr-|-NHMec, and Leu-Tyr-Leu-|-Tyr-Trp, in which cleavage of the -Tyr-|-Leu- and -Tyr-|-Trp bonds also occurs).. Cleaves peptides in various proteins in a process that requires ATP hydrolysis. Has a chymotrypsin-like activity. Plays a major role in the degradation of misfolded proteins. This is ATP-dependent Clp protease proteolytic subunit from Aliarcobacter butzleri (strain RM4018) (Arcobacter butzleri).